Consider the following 211-residue polypeptide: Protein-lysine N-methyltransferase DDB_G0272708 (211 aa).

Belongs to the class I-like SAM-binding methyltransferase superfamily. EFM5 family.

The protein resides in the cytoplasm. In terms of biological role, S-adenosyl-L-methionine-dependent protein-lysine N-methyltransferase that methylates elongation factor 1-alpha. In Dictyostelium discoideum (Social amoeba), this protein is Protein-lysine N-methyltransferase DDB_G0272708.